Consider the following 451-residue polypeptide: Probable plasmid replicative DNA helicase (451 aa).

Positions 194-451 constitute an SF4 helicase domain; it reads NDSFYDGLPT…SKFSAIKKVW (258 aa). Residue 225 to 232 coordinates ATP; that stretch reads ARPSIGKT.

Belongs to the helicase family. DnaB subfamily. In terms of assembly, homohexamer.

The catalysed reaction is Couples ATP hydrolysis with the unwinding of duplex DNA at the replication fork by translocating in the 5'-3' direction. This creates two antiparallel DNA single strands (ssDNA). The leading ssDNA polymer is the template for DNA polymerase III holoenzyme which synthesizes a continuous strand.. The enzyme catalyses ATP + H2O = ADP + phosphate + H(+). Functionally, a replicative DNA helicase, it participates in initiation and elongation during DNA replication. Travels ahead of the DNA replisome, separating dsDNA into templates for DNA synthesis. A processive ATP-dependent 5'-3' DNA helicase it has DNA-dependent ATPase activity. This is Probable plasmid replicative DNA helicase from Chlamydia muridarum (strain MoPn / Nigg).